Consider the following 341-residue polypeptide: tRNA N6-adenosine threonylcarbamoyltransferase (341 aa).

Residues His117 and His121 each contribute to the Fe cation site. Substrate-binding positions include 140-144, Asp173, Gly186, and Asn278; that span reads VVSGG. Asp306 contributes to the Fe cation binding site.

This sequence belongs to the KAE1 / TsaD family. The cofactor is Fe(2+).

The protein resides in the cytoplasm. The enzyme catalyses L-threonylcarbamoyladenylate + adenosine(37) in tRNA = N(6)-L-threonylcarbamoyladenosine(37) in tRNA + AMP + H(+). Required for the formation of a threonylcarbamoyl group on adenosine at position 37 (t(6)A37) in tRNAs that read codons beginning with adenine. Is involved in the transfer of the threonylcarbamoyl moiety of threonylcarbamoyl-AMP (TC-AMP) to the N6 group of A37, together with TsaE and TsaB. TsaD likely plays a direct catalytic role in this reaction. The chain is tRNA N6-adenosine threonylcarbamoyltransferase from Symbiobacterium thermophilum (strain DSM 24528 / JCM 14929 / IAM 14863 / T).